Here is a 443-residue protein sequence, read N- to C-terminus: Glutamate--tRNA ligase 2 (443 aa).

Positions 7 to 17 (PSPTGLIHVGN) match the 'HIGH' region motif. A 'KMSKS' region motif is present at residues 240 to 244 (KLSKR). Residue Lys243 coordinates ATP.

Belongs to the class-I aminoacyl-tRNA synthetase family. Glutamate--tRNA ligase type 1 subfamily. As to quaternary structure, monomer.

It localises to the cytoplasm. It catalyses the reaction tRNA(Glu) + L-glutamate + ATP = L-glutamyl-tRNA(Glu) + AMP + diphosphate. Its function is as follows. Catalyzes the attachment of glutamate to tRNA(Glu) in a two-step reaction: glutamate is first activated by ATP to form Glu-AMP and then transferred to the acceptor end of tRNA(Glu). This is Glutamate--tRNA ligase 2 from Gluconacetobacter diazotrophicus (strain ATCC 49037 / DSM 5601 / CCUG 37298 / CIP 103539 / LMG 7603 / PAl5).